The following is an 89-amino-acid chain: Small ribosomal subunit protein uS15 (89 aa).

It belongs to the universal ribosomal protein uS15 family. As to quaternary structure, part of the 30S ribosomal subunit. Forms a bridge to the 50S subunit in the 70S ribosome, contacting the 23S rRNA.

Functionally, one of the primary rRNA binding proteins, it binds directly to 16S rRNA where it helps nucleate assembly of the platform of the 30S subunit by binding and bridging several RNA helices of the 16S rRNA. Forms an intersubunit bridge (bridge B4) with the 23S rRNA of the 50S subunit in the ribosome. This chain is Small ribosomal subunit protein uS15, found in Parvibaculum lavamentivorans (strain DS-1 / DSM 13023 / NCIMB 13966).